Reading from the N-terminus, the 108-residue chain is UPF0060 membrane protein Msil_1658 (108 aa).

The next 4 helical transmembrane spans lie at 5-25, 31-51, 62-82, and 88-108; these read LVYV…WAWL, SLWL…LTLI, AYGG…EGVW, and LGGA…PRPA.

It belongs to the UPF0060 family.

Its subcellular location is the cell inner membrane. This chain is UPF0060 membrane protein Msil_1658, found in Methylocella silvestris (strain DSM 15510 / CIP 108128 / LMG 27833 / NCIMB 13906 / BL2).